The following is a 394-amino-acid chain: Elongation factor Tu 1 (394 aa).

Positions 10 to 204 constitute a tr-type G domain; it reads KPHVNVGTIG…ALDSYIPQPE (195 aa). Residues 19–26 are G1; that stretch reads GHVDHGKT. GTP is bound at residue 19-26; the sequence is GHVDHGKT. Thr-26 is a Mg(2+) binding site. Positions 60–64 are G2; the sequence is GITIN. Positions 81–84 are G3; that stretch reads DCPG. GTP contacts are provided by residues 81–85 and 136–139; these read DCPGH and NKCD. The interval 136 to 139 is G4; it reads NKCD. The G5 stretch occupies residues 174 to 176; it reads SAL.

This sequence belongs to the TRAFAC class translation factor GTPase superfamily. Classic translation factor GTPase family. EF-Tu/EF-1A subfamily. Monomer.

The protein localises to the cytoplasm. It carries out the reaction GTP + H2O = GDP + phosphate + H(+). In terms of biological role, GTP hydrolase that promotes the GTP-dependent binding of aminoacyl-tRNA to the A-site of ribosomes during protein biosynthesis. The sequence is that of Elongation factor Tu 1 from Yersinia pestis bv. Antiqua (strain Nepal516).